A 558-amino-acid chain; its full sequence is 2-hydroxy-7-methoxy-5-methyl-1-naphthoate--CoA ligase (558 aa).

Residues 212-213 (GG), 329-331 (ASR), valine 351, aspartate 435, arginine 450, and lysine 542 contribute to the ATP site.

It belongs to the ATP-dependent AMP-binding enzyme family.

It carries out the reaction 2-hydroxy-7-methoxy-5-methyl-1-naphthoate + ATP + CoA = 2-hydroxy-7-methoxy-5-methyl-1-naphthoyl-CoA + AMP + diphosphate. It functions in the pathway antibiotic biosynthesis. Catalyzes the activation of 2-hydroxy-7-methoxy-5-methyl-1-naphthoate in the biosynthesis of the naphthoate moiety of the neocarzinostatin chromophore. Also catalyzes the activation of other 1-naphthoic acid analogs such as 2-hydroxy-5-methyl-1-naphthoate or 2,7-dihydroxy-5-methyl-1-naphthoate in vitro. In Streptomyces carzinostaticus, this protein is 2-hydroxy-7-methoxy-5-methyl-1-naphthoate--CoA ligase.